A 413-amino-acid chain; its full sequence is Serine/threonine transporter SstT (413 aa).

The next 8 helical transmembrane spans lie at 19–39, 61–81, 89–109, 148–168, 189–209, 223–243, 297–317, and 325–345; these read IFIGLILGLLVALVTPTLQNV, AVAPILIFVLVMAAIANKKIG, IIVLYLLGTFLAALSAVIAGF, ALFKANFVGVLAWSIGLGLAL, IVYVIIAFAPIGVFGLVSETL, LLAVLVGTMLFVAFVVNPILV, IPLGATINMAGAAITVTILTL, and IQISFFSALLLSVVASICACG.

This sequence belongs to the dicarboxylate/amino acid:cation symporter (DAACS) (TC 2.A.23) family.

It localises to the cell inner membrane. It carries out the reaction L-serine(in) + Na(+)(in) = L-serine(out) + Na(+)(out). The catalysed reaction is L-threonine(in) + Na(+)(in) = L-threonine(out) + Na(+)(out). Involved in the import of serine and threonine into the cell, with the concomitant import of sodium (symport system). The chain is Serine/threonine transporter SstT from Pasteurella multocida (strain Pm70).